The primary structure comprises 120 residues: Large ribosomal subunit protein bL17 (120 aa).

It belongs to the bacterial ribosomal protein bL17 family. Part of the 50S ribosomal subunit. Contacts protein L32.

This Bacillus licheniformis (strain ATCC 14580 / DSM 13 / JCM 2505 / CCUG 7422 / NBRC 12200 / NCIMB 9375 / NCTC 10341 / NRRL NRS-1264 / Gibson 46) protein is Large ribosomal subunit protein bL17.